The following is a 302-amino-acid chain: tRNA-cytidine(32) 2-sulfurtransferase (302 aa).

The PP-loop motif motif lies at 43-48 (SGGKDS). [4Fe-4S] cluster contacts are provided by Cys118, Cys121, and Cys209.

It belongs to the TtcA family. Homodimer. It depends on Mg(2+) as a cofactor. [4Fe-4S] cluster serves as cofactor.

It is found in the cytoplasm. The catalysed reaction is cytidine(32) in tRNA + S-sulfanyl-L-cysteinyl-[cysteine desulfurase] + AH2 + ATP = 2-thiocytidine(32) in tRNA + L-cysteinyl-[cysteine desulfurase] + A + AMP + diphosphate + H(+). Its pathway is tRNA modification. In terms of biological role, catalyzes the ATP-dependent 2-thiolation of cytidine in position 32 of tRNA, to form 2-thiocytidine (s(2)C32). The sulfur atoms are provided by the cysteine/cysteine desulfurase (IscS) system. The protein is tRNA-cytidine(32) 2-sulfurtransferase of Polynucleobacter asymbioticus (strain DSM 18221 / CIP 109841 / QLW-P1DMWA-1) (Polynucleobacter necessarius subsp. asymbioticus).